Reading from the N-terminus, the 350-residue chain is ATP-dependent (S)-NAD(P)H-hydrate dehydratase (350 aa).

The 308-residue stretch at 35-342 folds into the YjeF C-terminal domain; that stretch reads LMQSVKRIIP…PEVGRAYEEL (308 aa). (6S)-NADPHX is bound by residues G139 and 192–198; that span reads NVAEFGR. ATP-binding positions include 230-234 and 249-258; these read KGPVD and GGLKRCGGQG. D259 contacts (6S)-NADPHX.

This sequence belongs to the NnrD/CARKD family. The cofactor is Mg(2+).

Its subcellular location is the cytoplasm. It catalyses the reaction (6S)-NADHX + ATP = ADP + phosphate + NADH + H(+). The enzyme catalyses (6S)-NADPHX + ATP = ADP + phosphate + NADPH + H(+). In terms of biological role, catalyzes the dehydration of the S-form of NAD(P)HX at the expense of ATP, which is converted to ADP. Together with NAD(P)HX epimerase, which catalyzes the epimerization of the S- and R-forms, the enzyme allows the repair of both epimers of NAD(P)HX, a damaged form of NAD(P)H that is a result of enzymatic or heat-dependent hydration. This is ATP-dependent (S)-NAD(P)H-hydrate dehydratase from Mycosarcoma maydis (Corn smut fungus).